The primary structure comprises 41 residues: Peptide Hact-SCRiP1 (41 aa).

Cystine bridges form between cysteine 5-cysteine 37, cysteine 12-cysteine 31, cysteine 19-cysteine 38, and cysteine 26-cysteine 39.

As to expression, expressed in tentacles.

Its subcellular location is the nematocyst. The protein resides in the secreted. Its function is as follows. Peptide with unknown function. Does not exhibit any effect on human ion channel TRPV1 in a Xenopus laevis oocytes assay. This Heliofungia actiniformis (Mushroom coral) protein is Peptide Hact-SCRiP1.